The following is a 185-amino-acid chain: Ribosome-recycling factor (185 aa).

The protein belongs to the RRF family.

The protein resides in the cytoplasm. Functionally, responsible for the release of ribosomes from messenger RNA at the termination of protein biosynthesis. May increase the efficiency of translation by recycling ribosomes from one round of translation to another. In Buchnera aphidicola subsp. Acyrthosiphon pisum (strain APS) (Acyrthosiphon pisum symbiotic bacterium), this protein is Ribosome-recycling factor.